The primary structure comprises 65 residues: 7 kDa A-type inclusion protein (65 aa).

Residues 1 to 20 (MSNQNIPQLSEYQTSVSQVA) show a composition bias toward polar residues. The tract at residues 1–32 (MSNQNIPQLSEYQTSVSQVAVTPPPKPKTPQI) is disordered.

This is 7 kDa A-type inclusion protein from Bos taurus (Bovine).